The primary structure comprises 183 residues: Troponin I, fast skeletal muscle (183 aa).

Ser-2 carries the post-translational modification N-acetylserine. The tract at residues 2 to 48 is involved in binding TNC; it reads SDEEKKRRAATARRQHLKSAMLQLAVTEIEKEAAAKEVEKQNYLAEH. The tract at residues 97 to 117 is involved in binding TNC and actin; sequence SQKLFDLRGKFKRPPLRRVRM.

It belongs to the troponin I family. As to quaternary structure, binds to actin and tropomyosin. The N-terminus is blocked.

Its function is as follows. Troponin I is the inhibitory subunit of troponin, the thin filament regulatory complex which confers calcium-sensitivity to striated muscle actomyosin ATPase activity. This is Troponin I, fast skeletal muscle (TNNI2) from Gallus gallus (Chicken).